We begin with the raw amino-acid sequence, 504 residues long: Maturase K (504 aa).

It belongs to the intron maturase 2 family. MatK subfamily.

The protein resides in the plastid. The protein localises to the chloroplast. Usually encoded in the trnK tRNA gene intron. Probably assists in splicing its own and other chloroplast group II introns. In Lablab purpureus (Hyacinth bean), this protein is Maturase K.